The chain runs to 430 residues: MRYPLGEALLALYRWRGPLINAGVGGHGYTYLLGAEANRFVFANADAFSWSQTFESLVPVDGPTALIVSDGADHRRRRSVVAPGLRHHHVQRYVATMVSNIDTVIDGWQPGQRLDIYQELRSAVRRSTAESLFGQRLAVHSDFLGEQLQPLLDLTRRPPQVMRLQQRVNSPGWRRAMAARKRIDDLIDAQIADARTAPRPDDHMLTTLISGCSEEGTTLSDNEIRDSIVSLITAGYETTSGALAWAIYALLTVPGTWESAASEVARVLGGRVPAADDLSALTYLNGVVHETLRLYSPGVISARRVLRDLWFDGHRIRAGRLLIFSAYVTHRLPEIWPEPTEFRPLRWDPNAADYRKPAPHEFIPFSGGLHRCIGAVMATTEMTVILARLVARAMLQLPAQRTHRIRAANFAALRPWPGLTVEIRKSAPAQ.

Cys372 contacts heme.

This sequence belongs to the cytochrome P450 family. The cofactor is heme.

The chain is Putative cytochrome P450 139 (cyp139) from Mycobacterium bovis (strain ATCC BAA-935 / AF2122/97).